A 137-amino-acid chain; its full sequence is Small ribosomal subunit protein uS12 (137 aa).

Residues 1–57 (MPTINQLVRKPRKSKVEKSKSPALNVGYNSHKKVQTNVSSPQKRGVATRVGTMTPKK) form a disordered region. The residue at position 102 (D102) is a 3-methylthioaspartic acid.

This sequence belongs to the universal ribosomal protein uS12 family. In terms of assembly, part of the 30S ribosomal subunit. Contacts proteins S8 and S17. May interact with IF1 in the 30S initiation complex.

In terms of biological role, with S4 and S5 plays an important role in translational accuracy. Interacts with and stabilizes bases of the 16S rRNA that are involved in tRNA selection in the A site and with the mRNA backbone. Located at the interface of the 30S and 50S subunits, it traverses the body of the 30S subunit contacting proteins on the other side and probably holding the rRNA structure together. The combined cluster of proteins S8, S12 and S17 appears to hold together the shoulder and platform of the 30S subunit. This is Small ribosomal subunit protein uS12 from Streptococcus sanguinis (strain SK36).